Consider the following 261-residue polypeptide: Thiazole synthase (261 aa).

Lys-98 acts as the Schiff-base intermediate with DXP in catalysis. 1-deoxy-D-xylulose 5-phosphate-binding positions include Gly-159, Ala-185 to Gly-186, and Ala-207 to Ser-208.

This sequence belongs to the ThiG family. As to quaternary structure, homotetramer. Forms heterodimers with either ThiH or ThiS.

The protein localises to the cytoplasm. It carries out the reaction [ThiS sulfur-carrier protein]-C-terminal-Gly-aminoethanethioate + 2-iminoacetate + 1-deoxy-D-xylulose 5-phosphate = [ThiS sulfur-carrier protein]-C-terminal Gly-Gly + 2-[(2R,5Z)-2-carboxy-4-methylthiazol-5(2H)-ylidene]ethyl phosphate + 2 H2O + H(+). The protein operates within cofactor biosynthesis; thiamine diphosphate biosynthesis. Its function is as follows. Catalyzes the rearrangement of 1-deoxy-D-xylulose 5-phosphate (DXP) to produce the thiazole phosphate moiety of thiamine. Sulfur is provided by the thiocarboxylate moiety of the carrier protein ThiS. In vitro, sulfur can be provided by H(2)S. In Mycobacterium leprae (strain Br4923), this protein is Thiazole synthase.